A 261-amino-acid chain; its full sequence is MEVIICSDEQAVGRIAADRIAKVLGRAKAPVLGVATGSTPLTTYSSLAALAAEGKADFTDLRAFALDEYIGLPADDERSYAATIRHTVTEQLGLDPANVHTPDGMADDLDAACAAYETAIQEADGVDVQILGIGANGHIGFNEPTSSLSSRTRVKTLAERTKADNARFFEEGEKVPSHCVTQGLGTIMDARNVVLLAIGANKADALAGAVEGPVSAMCPASVLQFHPHVLVIADDAAASKLTMAEYFRWTDSQRGDLSGAM.

Aspartate 67 (proton acceptor; for enolization step) is an active-site residue. Asparagine 136 serves as the catalytic For ring-opening step. Histidine 138 serves as the catalytic Proton acceptor; for ring-opening step. Glutamate 143 functions as the For ring-opening step in the catalytic mechanism.

The protein belongs to the glucosamine/galactosamine-6-phosphate isomerase family. NagB subfamily.

The enzyme catalyses alpha-D-glucosamine 6-phosphate + H2O = beta-D-fructose 6-phosphate + NH4(+). Its pathway is amino-sugar metabolism; N-acetylneuraminate degradation; D-fructose 6-phosphate from N-acetylneuraminate: step 5/5. Its function is as follows. Catalyzes the reversible isomerization-deamination of glucosamine 6-phosphate (GlcN6P) to form fructose 6-phosphate (Fru6P) and ammonium ion. The sequence is that of Glucosamine-6-phosphate deaminase from Cutibacterium acnes (strain DSM 16379 / KPA171202) (Propionibacterium acnes).